The following is a 481-amino-acid chain: Serine--tRNA ligase (481 aa).

284–286 (TAE) provides a ligand contact to L-serine. Residue 315 to 317 (RAE) coordinates ATP. Glu-338 serves as a coordination point for L-serine. 405–408 (EISS) is an ATP binding site. Ser-440 contacts L-serine.

Belongs to the class-II aminoacyl-tRNA synthetase family. Type-1 seryl-tRNA synthetase subfamily. Homodimer. The tRNA molecule binds across the dimer.

Its subcellular location is the cytoplasm. It carries out the reaction tRNA(Ser) + L-serine + ATP = L-seryl-tRNA(Ser) + AMP + diphosphate + H(+). It catalyses the reaction tRNA(Sec) + L-serine + ATP = L-seryl-tRNA(Sec) + AMP + diphosphate + H(+). The protein operates within aminoacyl-tRNA biosynthesis; selenocysteinyl-tRNA(Sec) biosynthesis; L-seryl-tRNA(Sec) from L-serine and tRNA(Sec): step 1/1. Functionally, catalyzes the attachment of serine to tRNA(Ser). Is also able to aminoacylate tRNA(Sec) with serine, to form the misacylated tRNA L-seryl-tRNA(Sec), which will be further converted into selenocysteinyl-tRNA(Sec). The polypeptide is Serine--tRNA ligase (Rhodopseudomonas palustris (strain BisB18)).